Here is a 636-residue protein sequence, read N- to C-terminus: Nuclear receptor subfamily 2 group C member 1 (636 aa).

Positions 149 to 224 (VELCVVCGDK…LGMKQDSVQC (76 aa)) form a DNA-binding region, nuclear receptor. 2 NR C4-type zinc fingers span residues 152–172 (CVVC…CEGC) and 188–207 (CRGS…CQYC). The 242-residue stretch at 382–623 (ECVGSNSNLT…SIIPYILRME (242 aa)) folds into the NR LBD domain.

It belongs to the nuclear hormone receptor family. NR2 subfamily.

Its subcellular location is the nucleus. Its function is as follows. Orphan nuclear receptor. Binds the IR7 element in the promoter of its own gene in an autoregulatory negative feedback mechanism. Primarily repressor of a broad range of genes. Binds to hormone response elements (HREs) consisting of two 5'-AGGTCA-3' half site direct repeat consensus sequences. This chain is Nuclear receptor subfamily 2 group C member 1, found in Xenopus tropicalis (Western clawed frog).